Reading from the N-terminus, the 432-residue chain is FMRFamide peptide receptor frpr-18 (432 aa).

Topologically, residues 1 to 8 are extracellular; that stretch reads MESQQLMA. The chain crosses the membrane as a helical span at residues 9 to 29; it reads CAILVIVLVGIFGNSLSFILF. Residues 30 to 42 lie on the Cytoplasmic side of the membrane; that stretch reads SRPHMRSSSVNVL. Residues 43 to 63 traverse the membrane as a helical segment; it reads LCALSFFDFSLLTLSIPIFVI. The Extracellular segment spans residues 64 to 84; it reads PNLDLWANDLSLSTYMAYILK. The chain crosses the membrane as a helical span at residues 85-105; sequence LIYPINLMMQTCSVYIMVMIT. Over 106–128 the chain is Cytoplasmic; the sequence is LERWVAVCRPLQVRVWCTPRKSR. Residues 129 to 149 form a helical membrane-spanning segment; the sequence is NAILVIIVSAFLYNFVRFFEY. The Extracellular segment spans residues 150-176; that stretch reads RFVVTESGALYEKWLRDPGKHRWYYVG. A helical membrane pass occupies residues 177–197; it reads YYTILYIVTHFLVPFSVMAFA. The Cytoplasmic segment spans residues 198-225; sequence NGHVIVAMCKLSKTRQMLTRQQQREQST. The helical transmembrane segment at 226–246 threads the bilayer; sequence TVMLLIVTFVFAICNTLPFLL. Residues 247-271 lie on the Extracellular side of the membrane; the sequence is NVSESIFPTLFQDESTRGLAYWLND. A helical membrane pass occupies residues 272 to 292; that stretch reads LSNLLVVLNSGTTFIIYFTFS. Residues 293-432 are Cytoplasmic-facing; that stretch reads EKYRQTLVFI…GEPDSPCQPC (140 aa). Disordered stretches follow at residues 328 to 349 and 388 to 411; these read ISSE…SSRS and KLPS…GMPE.

Belongs to the G-protein coupled receptor 1 family. In terms of tissue distribution, expressed in a subset of neurons in the head, midbody, and tail, including AIY, ASI, BAG, URA, CAN, I6, PVQ, DVA, RIM, and VC, and in the anal sphincter and intestinal muscles. Expression from the ASI neurons is involved in promoting arousal.

The protein localises to the cell membrane. In terms of biological role, G-protein coupled receptor for flp-2 neuropeptides. May act through the G(q) alpha type of G proteins. Involved in mediating arousal from the sleep-like state called lethargus, which occurs during molting between larval and adult stages, in part by regulating touch sensitivity, and working in concert with neuropeptide pdf-1. The chain is FMRFamide peptide receptor frpr-18 from Caenorhabditis elegans.